Here is an 874-residue protein sequence, read N- to C-terminus: Pentatricopeptide repeat-containing protein At2g17140 (874 aa).

PPR repeat units lie at residues 111–145, 146–180, 181–215, 216–250, 251–285, 290–320, 325–359, 360–394, 395–429, 430–464, 465–499, 523–557, 558–592, 593–627, 628–662, 663–693, 697–731, 732–766, and 767–797; these read SVYL…GIAP, QTYT…GCKP, NEFT…GVLP, NKVI…GLVP, DIVT…EYLG, NSIT…IREN, SLQS…GIGP, SIYS…GVCP, DAVT…NCLP, NAYT…GYGL, DTVT…GSAA, DLIT…KLQP, DSVA…GCHK, SLET…GISP, NICT…NIAP, NVFS…AVSI, KEGL…GFEL, GTFL…GYGF, and DPAA…MMEM.

The protein belongs to the PPR family. P subfamily.

The chain is Pentatricopeptide repeat-containing protein At2g17140 from Arabidopsis thaliana (Mouse-ear cress).